The following is a 650-amino-acid chain: Hemocyanin subunit 2 (650 aa).

O-linked (GalNAc...) serine glycans are attached at residues serine 120 and serine 172. Cu cation is bound by residues histidine 193, histidine 197, and histidine 225. The N-linked (GlcNAc...) asparagine glycan is linked to asparagine 309. Residues histidine 344, histidine 348, and histidine 384 each coordinate Cu cation.

Belongs to the tyrosinase family. Hemocyanin subfamily. Hexamer of a number of different chains, of which five have been identified. Post-translationally, contains one N-glycosylated and three O-glycosylated residues. The position of one of the O-glycosylated residues has not been determined. In terms of processing, O-linked glycan at Ser-120 may be composed of two GalNAc, three Gal, and two N-acetylneuraminic acid units for a total 1525-Da MW. As to expression, hemolymph.

The protein localises to the secreted. It localises to the extracellular space. Functionally, hemocyanins are copper-containing oxygen carriers occurring freely dissolved in the hemolymph of many mollusks and arthropods. The protein is Hemocyanin subunit 2 of Carcinus aestuarii (Green crab).